Reading from the N-terminus, the 67-residue chain is Alpha-like toxin Lqh3 (67 aa).

Residues 2–66 (RDGYIAQPEN…GIIVEGEKCH (65 aa)) enclose the LCN-type CS-alpha/beta domain. Disulfide bonds link C12–C65, C16–C37, C23–C47, and C27–C49. A Serine amide modification is found at S67.

This sequence belongs to the long (4 C-C) scorpion toxin superfamily. Sodium channel inhibitor family. Alpha subfamily. In terms of assembly, monomer. As to expression, expressed by the venom gland.

Its subcellular location is the secreted. Its function is as follows. Alpha toxins bind voltage-independently at site-3 of sodium channels (Nav) and inhibit the inactivation of the activated channels, thereby blocking neuronal transmission. The dissociation is voltage-dependent. This alpha-like toxin is highly toxic to insects and competes with LqhaIT on binding to insect sodium channels. Differs from classical anti-mammalian alpha-toxins as it inhibits sodium channel inactivation in cell bodies of hippocampus brain neurons, on which the anti-mammalian Lqh2 is inactive, and is unable to affect Nav1.2 in the rat brain, on which Lqh2 is highly active. Moreover, its pharmacological properties are unique in that its binding affinity for insect channels drops &gt;30-fold at pH 8.5 versus pH 6.5, and its rate of association with receptor site-3 on both insect and mammalian sodium channels is 4-15-fold slower compared with LqhaIT and Lqh2. The polypeptide is Alpha-like toxin Lqh3 (Leiurus hebraeus (Hebrew deathstalker scorpion)).